Reading from the N-terminus, the 122-residue chain is Large ribosomal subunit protein uL14 (122 aa).

Belongs to the universal ribosomal protein uL14 family. In terms of assembly, part of the 50S ribosomal subunit. Forms a cluster with proteins L3 and L19. In the 70S ribosome, L14 and L19 interact and together make contacts with the 16S rRNA in bridges B5 and B8.

Its function is as follows. Binds to 23S rRNA. Forms part of two intersubunit bridges in the 70S ribosome. The chain is Large ribosomal subunit protein uL14 from Paenarthrobacter aurescens (strain TC1).